We begin with the raw amino-acid sequence, 116 residues long: Ribosome-binding factor A (116 aa).

The protein belongs to the RbfA family. As to quaternary structure, monomer. Binds 30S ribosomal subunits, but not 50S ribosomal subunits or 70S ribosomes.

It localises to the cytoplasm. One of several proteins that assist in the late maturation steps of the functional core of the 30S ribosomal subunit. Associates with free 30S ribosomal subunits (but not with 30S subunits that are part of 70S ribosomes or polysomes). Required for efficient processing of 16S rRNA. May interact with the 5'-terminal helix region of 16S rRNA. The protein is Ribosome-binding factor A of Malacoplasma penetrans (strain HF-2) (Mycoplasma penetrans).